A 360-amino-acid polypeptide reads, in one-letter code: F-box protein SKP2B (360 aa).

One can recognise an F-box domain in the interval Ile-25–Lys-76. 9 LRR repeats span residues Asn-77–Gln-99, Lys-101–Lys-126, Ser-127–Gly-152, Cys-153–Gly-178, Val-180–Trp-205, Cys-206–Ser-231, Cys-232–Tyr-257, Cys-258–Gln-301, and Cys-302–Gly-333.

Its function is as follows. Component of SCF(SKP2B) E3 ubiquitin ligase complexes, which mediate the ubiquitination and subsequent proteasomal degradation of the cyclin-dependent kinase inhibitor KRP1. Does not interact with auxin. This is F-box protein SKP2B (SKP2B) from Arabidopsis thaliana (Mouse-ear cress).